The primary structure comprises 194 residues: Protein GrpE 2 (194 aa).

Residues Met1–Asn17 show a composition bias toward basic and acidic residues. The segment at Met1 to Val29 is disordered. The span at Asp18 to Val29 shows a compositional bias: polar residues.

The protein belongs to the GrpE family. In terms of assembly, homodimer.

It is found in the cytoplasm. Participates actively in the response to hyperosmotic and heat shock by preventing the aggregation of stress-denatured proteins, in association with DnaK and GrpE. It is the nucleotide exchange factor for DnaK and may function as a thermosensor. Unfolded proteins bind initially to DnaJ; upon interaction with the DnaJ-bound protein, DnaK hydrolyzes its bound ATP, resulting in the formation of a stable complex. GrpE releases ADP from DnaK; ATP binding to DnaK triggers the release of the substrate protein, thus completing the reaction cycle. Several rounds of ATP-dependent interactions between DnaJ, DnaK and GrpE are required for fully efficient folding. This is Protein GrpE 2 from Buchnera aphidicola subsp. Baizongia pistaciae (strain Bp).